A 160-amino-acid chain; its full sequence is MKITHHCLVSLLSILLLSGFAFSHHISLDEFESHPSTSRALLQAKATCKEDFAAKNYTIITSKCKGPNYPAKVCCSAFKDFACPFAEVLNDEKTDCASTMFSYINLYGRYPPGIFANMCKEGKEGLDCTDVTPTSSSHASIPLVSTHVLLITVSILFHLF.

A signal peptide spans 1–23 (MKITHHCLVSLLSILLLSGFAFS). N-linked (GlcNAc...) asparagine glycosylation is present at asparagine 56. Serine 137 is lipidated: GPI-anchor amidated serine. A propeptide spans 138–160 (HASIPLVSTHVLLITVSILFHLF) (removed in mature form).

In terms of tissue distribution, expressed in pollen, pollen tubes, sporophytic pistil tissues, in the early stages of female gametophyte development, and in unfertilized, mature ovules.

The protein resides in the cell membrane. The polypeptide is GPI-anchored protein LLG3 (Arabidopsis thaliana (Mouse-ear cress)).